The primary structure comprises 464 residues: Antithrombin-III (464 aa).

Positions 1–32 (MYSNVIGTVTSGKRKVYLLSLLLIGFWDCVTC) are cleaved as a signal peptide. 2 disulfide bridges follow: C40–C160 and C53–C127. T63 carries the phosphothreonine; by FAM20C modification. A Phosphoserine; by FAM20C modification is found at S68. W81 lines the heparin pocket. N-linked (GlcNAc...) asparagine glycosylation is present at N128. R161 serves as a coordination point for heparin. N167 is a glycosylation site (N-linked (GlcNAc...) asparagine). R177 contacts heparin. Residue N187 is glycosylated (N-linked (GlcNAc...) (complex) asparagine). Residue N224 is glycosylated (N-linked (GlcNAc...) asparagine). The cysteines at positions 279 and 462 are disulfide-linked.

Belongs to the serpin family. Forms protease inhibiting heterodimer with TMPRSS7. In terms of processing, phosphorylated by FAM20C in the extracellular medium. Found in plasma.

The protein localises to the secreted. It localises to the extracellular space. Most important serine protease inhibitor in plasma that regulates the blood coagulation cascade. AT-III inhibits thrombin, matriptase-3/TMPRSS7, as well as factors IXa, Xa and XIa. Its inhibitory activity is greatly enhanced in the presence of heparin. The protein is Antithrombin-III (SERPINC1) of Homo sapiens (Human).